A 320-amino-acid polypeptide reads, in one-letter code: 2-oxoglutarate-dependent dioxygenase thnC (320 aa).

The Fe2OG dioxygenase domain maps to 174 to 278 (PLVQMKLIRY…HSCATFWHGD (105 aa)). His199, Asp201, and His258 together coordinate Fe cation. Arg268 lines the 2-oxoglutarate pocket.

This sequence belongs to the iron/ascorbate-dependent oxidoreductase family. Fe(2+) serves as cofactor.

It carries out the reaction trihazone A + 2-oxoglutarate + O2 + H(+) = trihazone D + succinate + 2 CO2 + H2O. The protein operates within secondary metabolite biosynthesis. Its function is as follows. 2-oxoglutarate-dependent dioxygenase; part of the gene cluster that produces the tetronate natural products trihazones. ThnC catalyzes the oxidative decarboxylation of trihazone A to trihazone D. The C4 hydrogen is first abstracted by the iron-oxo species generated in ThnC to give a tertiary radical at C4. This is followed by decarboxylation and removal of the second electron by the FeIII-OH center to give trihazone D. The pathway begins with the formation of trihazone A by the hybrid PKS-NRPS synthetase thnA and the trans-enoyl reductase thnE. Trihazone A is further decarboxylated by the 2-oxoglutarate-dependent dioxygenase thnC to produce trihazone D. The function of the FAD-dependent monooxygenase thnD has still to be identified. In Trichoderma harzianum (Hypocrea lixii), this protein is 2-oxoglutarate-dependent dioxygenase thnC.